The chain runs to 252 residues: Phosphate import ATP-binding protein PstB 1 (252 aa).

The region spanning 6 to 247 (LQVSDLSVYY…PKHKETEDYI (242 aa)) is the ABC transporter domain. An ATP-binding site is contributed by 38–45 (GPSGSGKS).

This sequence belongs to the ABC transporter superfamily. Phosphate importer (TC 3.A.1.7) family. In terms of assembly, the complex is composed of two ATP-binding proteins (PstB), two transmembrane proteins (PstC and PstA) and a solute-binding protein (PstS).

The protein resides in the cell membrane. It catalyses the reaction phosphate(out) + ATP + H2O = ADP + 2 phosphate(in) + H(+). Functionally, part of the ABC transporter complex PstSACB involved in phosphate import. Responsible for energy coupling to the transport system. The protein is Phosphate import ATP-binding protein PstB 1 of Streptococcus agalactiae serotype Ia (strain ATCC 27591 / A909 / CDC SS700).